Consider the following 91-residue polypeptide: uncharacterized protein (91 aa).

This is an uncharacterized protein from Bacillus anthracis.